A 266-amino-acid polypeptide reads, in one-letter code: HLA class II histocompatibility antigen, DR beta 4 chain (266 aa).

An N-terminal signal peptide occupies residues 1-29 (MVCLKLPGGSCMAALTVTLTVLSSPLALA). Residues 30–124 (GDTQPRFLEQ…VESFTVQRRV (95 aa)) are beta-1. At 30–227 (GDTQPRFLEQ…SARSESAQSK (198 aa)) the chain is on the extracellular side. Disulfide bonds link cysteine 44–cysteine 108 and cysteine 146–cysteine 202. Asparagine 48 carries N-linked (GlcNAc...) asparagine glycosylation. A beta-2 region spans residues 125-227 (QPKVTVYPSK…SARSESAQSK (103 aa)). Positions 126-216 (PKVTVYPSKT…PSMMSPLTVQ (91 aa)) constitute an Ig-like C1-type domain. The chain crosses the membrane as a helical span at residues 228–250 (MLSGVGGFVLGLLFLGTGLFIYF). The Cytoplasmic segment spans residues 251 to 266 (RNQKGHSGLQPTGLLS). Residue lysine 254 forms a Glycyl lysine isopeptide (Lys-Gly) (interchain with G-Cter in ubiquitin) linkage.

It belongs to the MHC class II family. As to quaternary structure, heterodimer of an alpha and a beta subunit; also referred as MHC class II molecule. In the endoplasmic reticulum (ER) it forms a heterononamer; 3 MHC class II molecules bind to a CD74 homotrimer (also known as invariant chain or HLA class II histocompatibility antigen gamma chain). In the endosomal/lysosomal system; CD74 undergoes sequential degradation by various proteases; leaving a small fragment termed CLIP on each MHC class II molecule. MHC class II molecule interacts with HLA_DM, and HLA_DO in B-cells, in order to release CLIP and facilitate the binding of antigenic peptides. Post-translationally, ubiquitinated by MARCH1 and MARCH8 at Lys-254 leading to sorting into the endosome system and down-regulation of MHC class II. When associated with ubiquitination of the alpha subunit of HLA-DR: HLA-DRA 'Lys-244', the down-regulation of MHC class II may be highly effective.

It localises to the cell membrane. It is found in the endoplasmic reticulum membrane. The protein localises to the golgi apparatus. The protein resides in the trans-Golgi network membrane. Its subcellular location is the endosome membrane. It localises to the lysosome membrane. It is found in the late endosome membrane. Binds peptides derived from antigens that access the endocytic route of antigen presenting cells (APC) and presents them on the cell surface for recognition by the CD4 T-cells. The peptide binding cleft accommodates peptides of 10-30 residues. The peptides presented by MHC class II molecules are generated mostly by degradation of proteins that access the endocytic route, where they are processed by lysosomal proteases and other hydrolases. Exogenous antigens that have been endocytosed by the APC are thus readily available for presentation via MHC II molecules, and for this reason this antigen presentation pathway is usually referred to as exogenous. As membrane proteins on their way to degradation in lysosomes as part of their normal turn-over are also contained in the endosomal/lysosomal compartments, exogenous antigens must compete with those derived from endogenous components. Autophagy is also a source of endogenous peptides, autophagosomes constitutively fuse with MHC class II loading compartments. In addition to APCs, other cells of the gastrointestinal tract, such as epithelial cells, express MHC class II molecules and CD74 and act as APCs, which is an unusual trait of the GI tract. To produce a MHC class II molecule that presents an antigen, three MHC class II molecules (heterodimers of an alpha and a beta chain) associate with a CD74 trimer in the ER to form a heterononamer. Soon after the entry of this complex into the endosomal/lysosomal system where antigen processing occurs, CD74 undergoes a sequential degradation by various proteases, including CTSS and CTSL, leaving a small fragment termed CLIP (class-II-associated invariant chain peptide). The removal of CLIP is facilitated by HLA-DM via direct binding to the alpha-beta-CLIP complex so that CLIP is released. HLA-DM stabilizes MHC class II molecules until primary high affinity antigenic peptides are bound. The MHC II molecule bound to a peptide is then transported to the cell membrane surface. In B-cells, the interaction between HLA-DM and MHC class II molecules is regulated by HLA-DO. Primary dendritic cells (DCs) also to express HLA-DO. Lysosomal microenvironment has been implicated in the regulation of antigen loading into MHC II molecules, increased acidification produces increased proteolysis and efficient peptide loading. This Homo sapiens (Human) protein is HLA class II histocompatibility antigen, DR beta 4 chain (HLA-DRB4).